We begin with the raw amino-acid sequence, 66 residues long: Cold shock protein CspA (66 aa).

A CSD domain is found at 1–66; sequence MKQGTVKWFN…GPQAANVVKL (66 aa).

It is found in the cytoplasm. Its function is as follows. Involved in cold stress response. In Staphylococcus haemolyticus (strain JCSC1435), this protein is Cold shock protein CspA (cspA).